A 254-amino-acid chain; its full sequence is Acetylglutamate kinase (254 aa).

Substrate-binding positions include G40 to G41, R62, and N154.

This sequence belongs to the acetylglutamate kinase family. ArgB subfamily.

It is found in the cytoplasm. The catalysed reaction is N-acetyl-L-glutamate + ATP = N-acetyl-L-glutamyl 5-phosphate + ADP. It participates in amino-acid biosynthesis; L-arginine biosynthesis; N(2)-acetyl-L-ornithine from L-glutamate: step 2/4. Catalyzes the ATP-dependent phosphorylation of N-acetyl-L-glutamate. This chain is Acetylglutamate kinase, found in Staphylococcus aureus (strain Mu3 / ATCC 700698).